We begin with the raw amino-acid sequence, 121 residues long: Nitrogenase-stabilizing/protective protein NifW (121 aa).

Belongs to the NifW family. As to quaternary structure, homotrimer; associates with NifD.

May protect the nitrogenase Fe-Mo protein from oxidative damage. This is Nitrogenase-stabilizing/protective protein NifW from Leptothrix cholodnii (strain ATCC 51168 / LMG 8142 / SP-6) (Leptothrix discophora (strain SP-6)).